Consider the following 489-residue polypeptide: Rhamnulokinase (489 aa).

13 to 17 (ASSGR) provides a ligand contact to ATP. Cysteines 68 and 222 form a disulfide. Substrate-binding positions include Gly83 and 236–238 (HDT). The Proton acceptor role is filled by Asp237. Thr259 contacts ATP. Asn296 serves as a coordination point for substrate. Gln304 lines the ATP pocket. Cys353 and Cys370 are oxidised to a cystine. ATP is bound at residue Gly402. A disulfide bond links Cys413 and Cys417.

Belongs to the rhamnulokinase family. Mg(2+) is required as a cofactor.

The enzyme catalyses L-rhamnulose + ATP = L-rhamnulose 1-phosphate + ADP + H(+). It functions in the pathway carbohydrate degradation; L-rhamnose degradation; glycerone phosphate from L-rhamnose: step 2/3. In terms of biological role, involved in the catabolism of L-rhamnose (6-deoxy-L-mannose). Catalyzes the transfer of the gamma-phosphate group from ATP to the 1-hydroxyl group of L-rhamnulose to yield L-rhamnulose 1-phosphate. The protein is Rhamnulokinase of Salmonella agona (strain SL483).